The chain runs to 369 residues: Superinfection exclusion protein (369 aa).

The N-terminal stretch at 1–15 (MIALLILSLTCSAST) is a signal peptide.

Belongs to the serpin family. Orthopoxvirus OPG040 subfamily. As to quaternary structure, interacts with A56 protein.

Its subcellular location is the virion membrane. The protein resides in the host cell membrane. Functionally, prevents cell to cell fusion via its interaction with A56 protein. The A56-K2 complex associates with components of the entry fusion complex (EFC) presumably to avoid superinfection and syncytium formation. This chain is Superinfection exclusion protein (OPG040), found in Vaccinia virus (strain Ankara) (VACV).